The chain runs to 310 residues: tRNA-cytidine(32) 2-sulfurtransferase (310 aa).

The PP-loop motif signature appears at 48-53; it reads SGGKDS. Residues cysteine 123, cysteine 126, and cysteine 214 each contribute to the [4Fe-4S] cluster site.

It belongs to the TtcA family. In terms of assembly, homodimer. Mg(2+) is required as a cofactor. The cofactor is [4Fe-4S] cluster.

It is found in the cytoplasm. It catalyses the reaction cytidine(32) in tRNA + S-sulfanyl-L-cysteinyl-[cysteine desulfurase] + AH2 + ATP = 2-thiocytidine(32) in tRNA + L-cysteinyl-[cysteine desulfurase] + A + AMP + diphosphate + H(+). The protein operates within tRNA modification. In terms of biological role, catalyzes the ATP-dependent 2-thiolation of cytidine in position 32 of tRNA, to form 2-thiocytidine (s(2)C32). The sulfur atoms are provided by the cysteine/cysteine desulfurase (IscS) system. This Vibrio vulnificus (strain YJ016) protein is tRNA-cytidine(32) 2-sulfurtransferase.